Reading from the N-terminus, the 257-residue chain is MSDLKKAAQQAINLMDLTTLNDDDTDQKVIDLCHKAKTPAGDTAAICIYPRFIPIARKTLNEIGGDDIKIATVTNFPHGNDDIAIAVLETRAAVAYGADEVDVVFPYRALMAGNETVGFELVKACKEACGDEAILKVIIESGVLADPALIRKASELSIDAGADFIKTSTGKVAVNATLEAAEIMMTVISEKNTKVGFKPAGGVKDAAAAAEFLGVAARLLGDDWATPATFRFGASSLLTNLLHTLELGDAPKGPQGY.

The active-site Proton donor/acceptor is Asp-102. The active-site Schiff-base intermediate with acetaldehyde is the Lys-166. The active-site Proton donor/acceptor is Lys-198.

Belongs to the DeoC/FbaB aldolase family. DeoC type 2 subfamily.

The protein resides in the cytoplasm. It catalyses the reaction 2-deoxy-D-ribose 5-phosphate = D-glyceraldehyde 3-phosphate + acetaldehyde. It participates in carbohydrate degradation; 2-deoxy-D-ribose 1-phosphate degradation; D-glyceraldehyde 3-phosphate and acetaldehyde from 2-deoxy-alpha-D-ribose 1-phosphate: step 2/2. Functionally, catalyzes a reversible aldol reaction between acetaldehyde and D-glyceraldehyde 3-phosphate to generate 2-deoxy-D-ribose 5-phosphate. The polypeptide is Deoxyribose-phosphate aldolase (Shewanella piezotolerans (strain WP3 / JCM 13877)).